Reading from the N-terminus, the 177-residue chain is UBA-like domain-containing protein 1 (177 aa).

A disordered region spans residues 89–177; that stretch reads ESFHSGGSGS…RAHPAMEAER (89 aa). A compositionally biased stretch (low complexity) spans 112-138; it reads PHAATSSSAASSWPTAASPPGGPQHHQ. Residues 139 to 151 show a composition bias toward pro residues; that stretch reads PQPPLWTPTPPSP. A compositionally biased stretch (basic and acidic residues) spans 167–177; that stretch reads PRAHPAMEAER.

Belongs to the UBALD family.

The polypeptide is UBA-like domain-containing protein 1 (UBALD1) (Homo sapiens (Human)).